A 512-amino-acid polypeptide reads, in one-letter code: Glutathione-binding protein GsiB (512 aa).

Positions 1 to 26 (MARAVHRSGLVALGIATALMASCAFA) are cleaved as a signal peptide.

This sequence belongs to the bacterial solute-binding protein 5 family. The complex is composed of two ATP-binding proteins (GsiA), two transmembrane proteins (GsiC and GsiD) and a solute-binding protein (GsiB). In the presence of glutathione, interacts with the transmembrane proteins GsiC and GsiD.

Its subcellular location is the periplasm. Part of the ABC transporter complex GsiABCD involved in glutathione import. Binds glutathione. The polypeptide is Glutathione-binding protein GsiB (Escherichia coli (strain K12)).